We begin with the raw amino-acid sequence, 299 residues long: UPF0282 protein TK1681 (299 aa).

Belongs to the UPF0282 family.

This chain is UPF0282 protein TK1681, found in Thermococcus kodakarensis (strain ATCC BAA-918 / JCM 12380 / KOD1) (Pyrococcus kodakaraensis (strain KOD1)).